The following is a 793-amino-acid chain: Protein translocase subunit SecA 2 (793 aa).

ATP is bound by residues Q77, 95–99 (GEGKT), and D493.

It belongs to the SecA family. As to quaternary structure, monomer and homodimer (Potential). Part of the accessory SecA2/SecY2 protein translocation apparatus required to export cell wall protein GspB.

The protein localises to the cell membrane. It is found in the cytoplasm. It catalyses the reaction ATP + H2O + cellular proteinSide 1 = ADP + phosphate + cellular proteinSide 2.. Its function is as follows. Part of the accessory SecA2/SecY2 system specifically required to export GspB, a serine-rich repeat cell wall protein encoded upstream in the same operon. The protein is Protein translocase subunit SecA 2 of Streptococcus gordonii.